A 381-amino-acid polypeptide reads, in one-letter code: Alanine racemase, catabolic (381 aa).

Lysine 55 serves as the catalytic Proton acceptor; specific for D-alanine. The residue at position 55 (lysine 55) is an N6-(pyridoxal phosphate)lysine. Position 154 (arginine 154) interacts with substrate. Tyrosine 276 (proton acceptor; specific for L-alanine) is an active-site residue. Substrate is bound at residue methionine 322.

This sequence belongs to the alanine racemase family. Pyridoxal 5'-phosphate serves as cofactor.

It catalyses the reaction L-alanine = D-alanine. In terms of biological role, isomerizes L-alanine to D-alanine which is then oxidized to pyruvate by DadA. In Mesorhizobium japonicum (strain LMG 29417 / CECT 9101 / MAFF 303099) (Mesorhizobium loti (strain MAFF 303099)), this protein is Alanine racemase, catabolic (dadB).